Consider the following 144-residue polypeptide: D-aminoacyl-tRNA deacylase (144 aa).

Positions 136-137 (GP) match the Gly-cisPro motif, important for rejection of L-amino acids motif.

It belongs to the DTD family. In terms of assembly, homodimer.

It localises to the cytoplasm. The catalysed reaction is glycyl-tRNA(Ala) + H2O = tRNA(Ala) + glycine + H(+). It catalyses the reaction a D-aminoacyl-tRNA + H2O = a tRNA + a D-alpha-amino acid + H(+). In terms of biological role, an aminoacyl-tRNA editing enzyme that deacylates mischarged D-aminoacyl-tRNAs. Also deacylates mischarged glycyl-tRNA(Ala), protecting cells against glycine mischarging by AlaRS. Acts via tRNA-based rather than protein-based catalysis; rejects L-amino acids rather than detecting D-amino acids in the active site. By recycling D-aminoacyl-tRNA to D-amino acids and free tRNA molecules, this enzyme counteracts the toxicity associated with the formation of D-aminoacyl-tRNA entities in vivo and helps enforce protein L-homochirality. The protein is D-aminoacyl-tRNA deacylase of Histophilus somni (strain 129Pt) (Haemophilus somnus).